The chain runs to 456 residues: Argininosuccinate lyase (456 aa).

Belongs to the lyase 1 family. Argininosuccinate lyase subfamily.

The protein localises to the cytoplasm. The catalysed reaction is 2-(N(omega)-L-arginino)succinate = fumarate + L-arginine. The protein operates within amino-acid biosynthesis; L-arginine biosynthesis; L-arginine from L-ornithine and carbamoyl phosphate: step 3/3. In Listeria monocytogenes serotype 4a (strain HCC23), this protein is Argininosuccinate lyase.